A 175-amino-acid polypeptide reads, in one-letter code: Ferritin light chain (175 aa).

Ser-2 carries the N-acetylserine modification. Residues 7–156 (QNYSTEVEAA…DHLTNLRRLA (150 aa)) enclose the Ferritin-like diiron domain. The Fe cation site is built by Glu-54, Glu-57, Glu-58, Glu-61, and Glu-64.

Belongs to the ferritin family. Oligomer of 24 subunits. There are two types of subunits: L (light) chain and H (heavy) chain. The major chain can be light or heavy, depending on the species and tissue type. The functional molecule forms a roughly spherical shell with a diameter of 12 nm and contains a central cavity into which the insoluble mineral iron core is deposited. Interacts with NCOA4.

The protein localises to the cytoplasmic vesicle. It is found in the autophagosome. It localises to the cytoplasm. The protein resides in the autolysosome. In terms of biological role, stores iron in a soluble, non-toxic, readily available form. Important for iron homeostasis. Iron is taken up in the ferrous form and deposited as ferric hydroxides after oxidation. Also plays a role in delivery of iron to cells. Mediates iron uptake in capsule cells of the developing kidney. Delivery to lysosomes by the cargo receptor NCOA4 for autophagic degradation and release or iron. The sequence is that of Ferritin light chain (FTL) from Canis lupus familiaris (Dog).